Reading from the N-terminus, the 641-residue chain is Putative ABC transporter ATP-binding protein MA_0870 (641 aa).

The ABC transporter 1 domain maps to 10-250 (IEIKDLWYTY…IEVFHRLGLR (241 aa)). 44–51 (GPTGCGKS) is a binding site for ATP. The tract at residues 286 to 332 (VKTPRNFSNPEEETGRRTDPAERNEFVNTGSGNIKYGDNRSENKGSE) is disordered. Composition is skewed to basic and acidic residues over residues 298-310 (ETGR…ERNE) and 322-332 (GDNRSENKGSE). Positions 338–566 (ISIRDLWSGY…IEILKQASLT (229 aa)) constitute an ABC transporter 2 domain. Residue 371–378 (GTNGSGKS) participates in ATP binding.

Belongs to the ABC transporter superfamily.

It localises to the cell membrane. In terms of biological role, probably part of an ABC transporter complex. Responsible for energy coupling to the transport system. In Methanosarcina acetivorans (strain ATCC 35395 / DSM 2834 / JCM 12185 / C2A), this protein is Putative ABC transporter ATP-binding protein MA_0870.